A 579-amino-acid chain; its full sequence is MQSWNSQSFLSSHFTMLRYACKRAVPRLNAASGLRFQSSKPADGPETVFTSLNEENDPNRDAFFKYTWGTWLKNNEAERAKRETRFSIEGLAEVIKSLPQSGKAPIEAETEIKVTQLASLHEGKHHRVYRVDVDDGKQYVLRIPYGLGSELFRKKRIQSEVATMDFVREKVANNKFIVPEVYSWNATVDNPLDTQYTLMDYFAGRDTLMKHWNPVAQEMTERAAKIKPVVDIYSALLQPEFTRYGSLYFTEDVSSKDASVLAYKGAENDKKELADRWRIGPTTESRFWKNSLPEDSPLRGPWETAEEYIEATAAINLHNLAELAKNGDRNPAVVAAATATYEKYQQLASQLLLRPEVENDNLFSARMGFGDLHPINVLVEGQKDIAESSLALVDFENTSIKPALLIGTPDYVRYGGLKLFKTEDIPNYDQLSDQEKAQVNYMIAQTQNAFTFEFLLNNEAPEFINSFSPRVKRLSEPVRLALNPLYLEDHLDLSEEMIKLQQDWTPIMGMEREFPVHWTNEEYEKQAKDFAEWNQKAMSTPFFQTKGWVPQDMFEQLFGNGLLDKTESGDYVYVPPKKE.

A mitochondrion-targeting transit peptide spans 1-36 (MQSWNSQSFLSSHFTMLRYACKRAVPRLNAASGLRF).

It belongs to the AIM9 family.

The protein localises to the mitochondrion. In Yarrowia lipolytica (strain CLIB 122 / E 150) (Yeast), this protein is Altered inheritance of mitochondria protein 9, mitochondrial (AIM9).